Consider the following 205-residue polypeptide: Ribonuclease HII (205 aa).

The region spanning 15–205 (SRVCGIDEAG…SFKLRKLGEK (191 aa)) is the RNase H type-2 domain. Residues Asp-21, Glu-22, and Asp-117 each coordinate a divalent metal cation.

This sequence belongs to the RNase HII family. The cofactor is Mn(2+). Mg(2+) serves as cofactor.

It is found in the cytoplasm. It catalyses the reaction Endonucleolytic cleavage to 5'-phosphomonoester.. Functionally, endonuclease that specifically degrades the RNA of RNA-DNA hybrids. The sequence is that of Ribonuclease HII from Chlorobaculum parvum (strain DSM 263 / NCIMB 8327) (Chlorobium vibrioforme subsp. thiosulfatophilum).